The primary structure comprises 330 residues: MLSGVQPTGSLHLGNYLGAIRNWVAGQAEYENYFCVVDLHAITVPHDPAELAANTYTVAALYLACGIDPAHATIFVQSHVSAHAELTWLLNCITPLNWLEDMIQFKEKAVKQGENVAAGLLDYPVLMAADILLYDADLVPVGEDQKQHLELTRDIAARVNYLFARNQPPILKLPEPLIPKAGARVMSLTDGTKKMSKSDPSELSRINLLDSPDEIRKKIKRCKTDPIRGLAFDDPDRPEANNLLSLYQVLTGKTKEAVAAECADMGWGQFKPLLTDAVIATLEPIQQRYNEIMADPSYLKDLLKKGQEQAATVANATLERVKLAFGFTLP.

ATP is bound by residues 6 to 8 (QPT) and 14 to 15 (GN). The 'HIGH' region signature appears at 7-15 (PTGSLHLGN). D130 provides a ligand contact to L-tryptophan. ATP-binding positions include 142 to 144 (GED), V185, and 194 to 198 (KMSKS). The 'KMSKS' region motif lies at 194–198 (KMSKS).

The protein belongs to the class-I aminoacyl-tRNA synthetase family. In terms of assembly, homodimer.

Its subcellular location is the cytoplasm. The catalysed reaction is tRNA(Trp) + L-tryptophan + ATP = L-tryptophyl-tRNA(Trp) + AMP + diphosphate + H(+). In terms of biological role, catalyzes the attachment of tryptophan to tRNA(Trp). This chain is Tryptophan--tRNA ligase, found in Thermosynechococcus vestitus (strain NIES-2133 / IAM M-273 / BP-1).